The following is a 226-amino-acid chain: Late protein I226R (226 aa).

The first 16 residues, 1–16 (MKMETFLVCLFHNAAG), serve as a signal peptide directing secretion. Asn164 is a glycosylation site (N-linked (GlcNAc...) asparagine; by host).

Belongs to the asfivirus I226R family.

Functionally, plays a role in the inhibition of host NF-kappa-B and IRF3 signaling pathways. Mechanistically, promotes the degradation of host IKBKG through enhancing its ubiquitination leading to inhibition of both pathways. In African swine fever virus (isolate Pig/Kenya/KEN-50/1950) (ASFV), this protein is Late protein I226R.